A 430-amino-acid polypeptide reads, in one-letter code: Delta(14)-sterol reductase (430 aa).

6 helical membrane-spanning segments follow: residues 12–32 (IGTG…HFLI), 67–87 (LAVA…PAEI), 109–129 (FLVF…TWWF), 230–250 (FVSD…VDAL), 267–287 (LGVM…CLQA), and 290–310 (LASF…AVQF). NADP(+) contacts are provided by residues Lys323, Arg327, Leu350, Trp355, and 362 to 363 (NY). The next 2 helical transmembrane spans lie at 349 to 369 (LLIS…DWIM) and 376 to 396 (TTGF…ILLL). Residues Asp402, 406–410 (CREKY), and Tyr417 each bind NADP(+).

The protein belongs to the ERG4/ERG24 family.

The protein localises to the membrane. It carries out the reaction 4,4-dimethyl-5alpha-cholesta-8,24-dien-3beta-ol + NADP(+) = 4,4-dimethyl-5alpha-cholesta-8,14,24-trien-3beta-ol + NADPH + H(+). It participates in steroid biosynthesis; zymosterol biosynthesis; zymosterol from lanosterol: step 2/6. Functionally, reduces the C14=C15 double bond of 4,4-dimethyl-cholesta-8,14,24-trienol to produce 4,4-dimethyl-cholesta-8,24-dienol. In Ascobolus immersus, this protein is Delta(14)-sterol reductase (ERG3).